Consider the following 443-residue polypeptide: Large ribosomal subunit protein mL50 (443 aa).

The tract at residues Gln121–Leu145 is disordered. Residues Asp126 to Asn135 show a composition bias toward basic and acidic residues.

Belongs to the mitochondrion-specific ribosomal protein mL50 family. As to quaternary structure, component of the mitochondrial large ribosomal subunit (mt-LSU). Mature N.crassa 74S mitochondrial ribosomes consist of a small (37S) and a large (54S) subunit. The 37S small subunit contains a 16S ribosomal RNA (16S mt-rRNA) and 32 different proteins. The 54S large subunit contains a 23S rRNA (23S mt-rRNA) and 42 different proteins.

It is found in the mitochondrion. In terms of biological role, component of the mitochondrial ribosome (mitoribosome), a dedicated translation machinery responsible for the synthesis of mitochondrial genome-encoded proteins, including at least some of the essential transmembrane subunits of the mitochondrial respiratory chain. The mitoribosomes are attached to the mitochondrial inner membrane and translation products are cotranslationally integrated into the membrane. The chain is Large ribosomal subunit protein mL50 (mrpl13) from Neurospora crassa (strain ATCC 24698 / 74-OR23-1A / CBS 708.71 / DSM 1257 / FGSC 987).